The primary structure comprises 461 residues: Fumarate hydratase class II (461 aa).

Residues 97–99, arginine 125, 128–131, 138–140, and threonine 186 each bind substrate; these read SGT, HPND, and SSN. The active-site Proton donor/acceptor is the histidine 187. Serine 317 is an active-site residue. Substrate is bound by residues serine 318 and 323 to 325; that span reads KVN.

The protein belongs to the class-II fumarase/aspartase family. Fumarase subfamily. In terms of assembly, homotetramer.

It is found in the cytoplasm. The catalysed reaction is (S)-malate = fumarate + H2O. The protein operates within carbohydrate metabolism; tricarboxylic acid cycle; (S)-malate from fumarate: step 1/1. In terms of biological role, involved in the TCA cycle. Catalyzes the stereospecific interconversion of fumarate to L-malate. The polypeptide is Fumarate hydratase class II (Ralstonia nicotianae (strain ATCC BAA-1114 / GMI1000) (Ralstonia solanacearum)).